A 95-amino-acid polypeptide reads, in one-letter code: Large ribosomal subunit protein bL25 (95 aa).

It belongs to the bacterial ribosomal protein bL25 family. In terms of assembly, part of the 50S ribosomal subunit; part of the 5S rRNA/L5/L18/L25 subcomplex. Contacts the 5S rRNA. Binds to the 5S rRNA independently of L5 and L18.

This is one of the proteins that binds to the 5S RNA in the ribosome where it forms part of the central protuberance. In Glaesserella parasuis serovar 5 (strain SH0165) (Haemophilus parasuis), this protein is Large ribosomal subunit protein bL25.